A 154-amino-acid chain; its full sequence is Endoribonuclease YbeY (154 aa).

3 residues coordinate Zn(2+): H114, H118, and H124.

The protein belongs to the endoribonuclease YbeY family. Zn(2+) is required as a cofactor.

Its subcellular location is the cytoplasm. Single strand-specific metallo-endoribonuclease involved in late-stage 70S ribosome quality control and in maturation of the 3' terminus of the 16S rRNA. This Aggregatibacter actinomycetemcomitans (Actinobacillus actinomycetemcomitans) protein is Endoribonuclease YbeY.